A 419-amino-acid polypeptide reads, in one-letter code: F-box/LRR-repeat protein At1g67190 (419 aa).

Positions 1-48 (MDYLPVEVIGNILSRLGGARDVVIASATCRKWREACRKHLQTLSFNSA) constitute an F-box domain. 9 LRR repeats span residues 53 to 82 (YRDLTTNRLEILITQTIFQTMGLQGLSIMM), 96 to 124 (WLMYTRDTLRRLSYNVRTTPNVNILEICG), 133 to 157 (LAHNSITGVEPSFQRFPCLKSLSLS), 158 to 183 (YVSISALDLNLLLSACPMIESLELVS), 185 to 209 (EIAMSDAQVTIELSSPTLKSVYFDG), 245 to 272 (HFKLDDVSVIHLDIMETSESLEVVDVNH), 273 to 297 (FTMVWPKFYQMISRSQKLKKLRLWD), 301 to 326 (DDDDEIIDVESIAAGFSHLTHLSLSY), and 356 to 381 (INDVFSIWVEELLRRCPNLKKLIIYG).

This Arabidopsis thaliana (Mouse-ear cress) protein is F-box/LRR-repeat protein At1g67190.